A 286-amino-acid chain; its full sequence is Aquaporin NIP4-1 (286 aa).

The next 2 membrane-spanning stretches (helical) occupy residues 59–79 (VMVEGLASFLVVFWSCVAALM) and 86–106 (LTFPMVCLVVAMTVAFVLSWL). The short motif at 112-114 (NPA) is the NPA 1 element. 3 helical membrane-spanning segments follow: residues 133–153 (LYVAAQLAGSLLACLSVNAVM), 173–193 (LPFLMEFLASAVLMIVIATVA), and 201–221 (TVGGIAIGAAVGGLGLVIGPV). Positions 227–229 (NPA) match the NPA 2 motif. A helical membrane pass occupies residues 241–261 (YDGVWIYVVAPVAGMLVGALC).

The protein belongs to the MIP/aquaporin (TC 1.A.8) family. NIP (TC 1.A.8.12) subfamily. As to expression, expressed in leaves and at lower levels in roots.

It localises to the membrane. Aquaporins facilitate the transport of water and small neutral solutes across cell membranes. The sequence is that of Aquaporin NIP4-1 (NIP4-1) from Oryza sativa subsp. japonica (Rice).